The following is a 577-amino-acid chain: Aspartate--tRNA(Asp/Asn) ligase (577 aa).

Glutamate 171 provides a ligand contact to L-aspartate. Residues 195–198 form an aspartate region; sequence QLFK. Arginine 217 provides a ligand contact to L-aspartate. ATP is bound by residues 217–219 and glutamine 226; that span reads RDE. L-aspartate is bound at residue histidine 444. ATP is bound at residue glutamate 474. Arginine 481 provides a ligand contact to L-aspartate. Residue 526–529 participates in ATP binding; the sequence is GFDR.

The protein belongs to the class-II aminoacyl-tRNA synthetase family. Type 1 subfamily. Homodimer.

It is found in the cytoplasm. The enzyme catalyses tRNA(Asx) + L-aspartate + ATP = L-aspartyl-tRNA(Asx) + AMP + diphosphate. Aspartyl-tRNA synthetase with relaxed tRNA specificity since it is able to aspartylate not only its cognate tRNA(Asp) but also tRNA(Asn). Reaction proceeds in two steps: L-aspartate is first activated by ATP to form Asp-AMP and then transferred to the acceptor end of tRNA(Asp/Asn). This chain is Aspartate--tRNA(Asp/Asn) ligase, found in Helicobacter pylori (strain G27).